Consider the following 82-residue polypeptide: Beta-defensin 113 (82 aa).

The first 16 residues, 1–16 (MKILCIFLTFVFTVSC), serve as a signal peptide directing secretion. 3 disulfide bridges follow: cysteine 35/cysteine 61, cysteine 42/cysteine 56, and cysteine 46/cysteine 62.

Belongs to the beta-defensin family.

The protein localises to the secreted. Functionally, has antibacterial activity. The sequence is that of Beta-defensin 113 (DEFB113) from Homo sapiens (Human).